The chain runs to 379 residues: Heme chaperone HemW (379 aa).

In terms of domain architecture, Radical SAM core spans 1–232 (MLQKPNSAYF…MDILAKNGYN (232 aa)). Tyrosine 9 contributes to the S-adenosyl-L-methionine binding site. The [4Fe-4S] cluster site is built by cysteine 15, cysteine 19, and cysteine 22. Residues glycine 60, 61 to 62 (GT), glutamate 93, glutamine 120, arginine 132, and aspartate 157 each bind S-adenosyl-L-methionine.

It belongs to the anaerobic coproporphyrinogen-III oxidase family. HemW subfamily. Homodimer.

Its subcellular location is the cytoplasm. It is found in the cell membrane. Its function is as follows. Could serve in the delivery of heme to a membrane-localized target protein. Binds one molecule of heme per monomer, possibly covalently; heme and Fe-S cluster binding are independent. Incubation with the reductant sodium dithionite increases binding. Does not have coproporphyrinogen III dehydrogenase activity in vitro, does not complement an E.coli hemN deletion in vivo. Binds 1 Fe-S cluster, it is probably [4Fe-4S]. The cluster is coordinated with 3 cysteines and an exchangeable S-adenosyl-L-methionine; only dimeric protein has the cluster. This is Heme chaperone HemW from Lactococcus lactis subsp. lactis (strain IL1403) (Streptococcus lactis).